The sequence spans 260 residues: MESHFNWYGVPRLQKASDACPRESCSSALPEAREGANVHFPPHPVPREHFSCGAPKPVAGAPALNASLMDGGALPRLVPTSSGVAGACTARRRPPSPELLRCSRRRRSGATEASSSSAAVARRNERERNRVKLVNLGFQALRQHVPHGGANKKLSKVETLRSAVEYIRALQRLLAEHDAVRAALSGGLLTPATRPSDVCTQPSASPASASLSCTSTSPDRLGCSEPASPRSAYSSEDSSCEGETYPMGQMFDFSNWLGGY.

Disordered regions lie at residues 85–126 (AGAC…RNER) and 191–239 (PATR…EDSS). Composition is skewed to low complexity over residues 110-121 (ATEASSSSAAVA) and 200-218 (TQPS…STSP). A bHLH domain is found at 118–170 (AAVARRNERERNRVKLVNLGFQALRQHVPHGGANKKLSKVETLRSAVEYIRAL).

As to quaternary structure, efficient DNA binding requires dimerization with another bHLH protein. Forms heterodimers with bHLH transcription factor TCF3. May not heterodimerise with bHLH protein HAND1. In terms of tissue distribution, expressed in Schwann cells in the peripheral nerve (at protein level). Also expressed by endothelial cells (at protein level). May be expressed in neuronal precursor cells.

Its subcellular location is the nucleus. The protein localises to the cytoplasm. Its function is as follows. Transcription factor. Binds to E-box motifs 5'-CANNTG-3' in the regulatory elements of target genes, probably as a heterodimer with another basic helix-loop-helix (bHLH) protein such as the transcription factor TCF3. May bind both open and closed chromatin, acting as a pioneer transcription factor to allow other factors to bind and activate lineage-specific genes. Required during post-implantation development for the generation of some differentiated trophoblast cell types. Transcriptional activity of ASCL2 may be antagonised in a subset of trophoblast cells by bHLH transcription factor HAND1, perhaps by competing for dimerization with other bHLH proteins. Involved in differentiation and function of follicular T-helper (Tfh) cells, thereby playing a role in germinal center responses; probably modulates expression of genes involved in Tfh cell function, such as BCL6. May also act as a suppressor of Th1-, Th2- and Th17-cell differentiation. Induces the formation of stem cells in intestinal crypts in vitro, synergistically activating transcription of target genes, such as SOX9, together with TCF4/beta-catenin. May form a bistable transcriptional switch, controlling expression of its own gene together with Wnt/R-spondin signaling, and thereby maintaining stem cell characteristics. Modulates expression of target genes, including perhaps down-regulating EGR1/Krox24 and chemokine CXCL10/Mob-1 and up-regulating CXCR4 and CDKN1C/p57kip2, in Schwann cells. May play a role in reducing proliferation of Schwann cells, perhaps acting via modulation of expression of CDKN1C. May be dispensable for blastocyst formation and later embryonic function. May be involved in the determination of neuronal precursors. The protein is Achaete-scute homolog 2 (Ascl2) of Rattus norvegicus (Rat).